We begin with the raw amino-acid sequence, 569 residues long: Potassium-transporting ATPase potassium-binding subunit (569 aa).

10 helical membrane-spanning segments follow: residues 3–23 (LMEY…SPVL), 68–88 (AASL…VLML), 136–156 (VGLA…AVAV), 179–199 (VLYV…GQGV), 259–279 (LQML…GGAV), 284–304 (HAWT…CSLY), 384–404 (GLYG…LMVG), 422–442 (AMLA…VAAV), 490–510 (IALA…GVAG), and 534–554 (LLLT…ALAL).

This sequence belongs to the KdpA family. In terms of assembly, the system is composed of three essential subunits: KdpA, KdpB and KdpC.

The protein localises to the cell inner membrane. In terms of biological role, part of the high-affinity ATP-driven potassium transport (or Kdp) system, which catalyzes the hydrolysis of ATP coupled with the electrogenic transport of potassium into the cytoplasm. This subunit binds the periplasmic potassium ions and delivers the ions to the membrane domain of KdpB through an intramembrane tunnel. This is Potassium-transporting ATPase potassium-binding subunit from Nitratidesulfovibrio vulgaris (strain ATCC 29579 / DSM 644 / CCUG 34227 / NCIMB 8303 / VKM B-1760 / Hildenborough) (Desulfovibrio vulgaris).